Here is a 132-residue protein sequence, read N- to C-terminus: uncharacterized protein (132 aa).

3 helical membrane-spanning segments follow: residues 28 to 48, 59 to 79, and 106 to 126; these read LLRL…LIYP, ILPS…LFSY, and LLVA…VIEI.

It localises to the membrane. This is an uncharacterized protein from Schizosaccharomyces pombe (strain 972 / ATCC 24843) (Fission yeast).